Consider the following 291-residue polypeptide: uncharacterized protein (291 aa).

In terms of domain architecture, HTH tetR-type spans K2–T62. The H-T-H motif DNA-binding region spans S25–F44.

This is an uncharacterized protein from Bacillus subtilis (strain 168).